The chain runs to 275 residues: Gamma carbonic anhydrase 1, mitochondrial (275 aa).

Residues 1 to 43 (MGTLGRAFYSVGFWIRETGQALDRLGCRLQGKNYFREQLSRHR) constitute a mitochondrion transit peptide. Substrate contacts are provided by residues 86–88 (RGD) and 101–102 (QD). Zn(2+)-binding residues include His-107, His-130, and His-135. Residue Asn-209 coordinates substrate. Residues 256–275 (LNLPNNILPDKETKRPSNVN) are disordered. Over residues 264–275 (PDKETKRPSNVN) the composition is skewed to basic and acidic residues.

The protein belongs to the gamma-class carbonic anhydrase family. In terms of assembly, homotrimer. Component of the mitochondrial oxidoreductase respiratory chain complex I; element of the extra matrix-exposed domain, which is attached to the membrane arm of this complex. Zn(2+) is required as a cofactor.

The protein resides in the mitochondrion membrane. In terms of biological role, enzyme involved in the catabolism of H(2)CO(3) but that does not mediates the reversible hydration of carbon dioxide. Mediates complex I assembly in mitochondria and respiration. In Arabidopsis thaliana (Mouse-ear cress), this protein is Gamma carbonic anhydrase 1, mitochondrial (GAMMACA1).